The primary structure comprises 471 residues: MARAEIVSHEPATGAEVWRGKVGDVEEVVARARRAWPAWAAQPLATRIELVRRFANEVRKDADNLATMISRETGKPLWEARTEVDSVVNKVEISIRAYADRTSQRKLDSALQGTAALRHKPHGVLAVLGPYNFPAHLPNGHIVPALIAGNAVVFKPSEKTPATGEMLAQCFHRAGIPAAVVQVLIGGPEEGQALVAHDGIDGVLFTGSAHAGIAINRKLASNPGKIVALEMGGNNPIVVWDTPKIEDAATLIVQSAFTSAGQRCTAARRLIIKASMFDEVIDHVKRLADRIIVGAPFDDPAPFMGPVIDNRTADGLTESFVYLLSSGGRPIKHMVRLQEDRPFLSPAIIDVTAVADRPDVELFGPLLQVVRVDDFDEAIAEANNTRFGLSASLIGGDPQDYNRFWANIRAGVVNWNRPTNGASSAAPFGGVGLSGNHRPSAYYAADYCAYPVASTEVDQPRASIGVGLRSD.

An NAD(+)-binding site is contributed by 207-212 (GSAHAG). Residues Glu-230 and Cys-264 contribute to the active site.

The protein belongs to the aldehyde dehydrogenase family. AstD subfamily.

It carries out the reaction N-succinyl-L-glutamate 5-semialdehyde + NAD(+) + H2O = N-succinyl-L-glutamate + NADH + 2 H(+). It participates in amino-acid degradation; L-arginine degradation via AST pathway; L-glutamate and succinate from L-arginine: step 4/5. Functionally, catalyzes the NAD-dependent reduction of succinylglutamate semialdehyde into succinylglutamate. The sequence is that of N-succinylglutamate 5-semialdehyde dehydrogenase from Novosphingobium aromaticivorans (strain ATCC 700278 / DSM 12444 / CCUG 56034 / CIP 105152 / NBRC 16084 / F199).